Reading from the N-terminus, the 997-residue chain is Sorting nexin-19 (997 aa).

Residues 95-273 enclose the PXA domain; it reads ERQLEQEINR…ILVSIFSKYR (179 aa). Disordered stretches follow at residues 313 to 333 and 413 to 437; these read SSPA…SPEI and GALE…APGT. Residues 422–435 show a composition bias toward acidic residues; that stretch reads GSECMEGAEAEEAP. Residues 538–668 enclose the PX domain; that stretch reads LRITGTITAR…EFLALNTDAR (131 aa). Residues R587 and R634 each contribute to the a 1,2-diacyl-sn-glycero-3-phospho-(1D-myo-inositol-3-phosphate) site. Positions 697 to 728 are disordered; it reads FPRSEPQSPTEELSEAENESKPQTEGKKASKS. A compositionally biased stretch (basic and acidic residues) spans 714–724; that stretch reads NESKPQTEGKK.

It belongs to the sorting nexin family. As to quaternary structure, interacts with PTPRN.

It localises to the early endosome membrane. The protein resides in the cytoplasmic vesicle membrane. Its function is as follows. Plays a role in intracellular vesicle trafficking and exocytosis. May play a role in maintaining insulin-containing dense core vesicles in pancreatic beta-cells and in preventing their degradation. May play a role in insulin secretion. Interacts with membranes containing phosphatidylinositol 3-phosphate (PtdIns(3P)). This chain is Sorting nexin-19, found in Mus musculus (Mouse).